Consider the following 454-residue polypeptide: Toxin CfTX-A (454 aa).

Positions 1–18 are cleaved as a signal peptide; the sequence is MDYAFIVFLVCFVSGTLG. Positions 19-25 are excised as a propeptide; sequence NRRRAKR. Positions 27 to 61 form a coiled coil; the sequence is VDEVTSGINQLVNQLNNVQQDTAAIKSALEELKTE.

Belongs to the jellyfish toxin family. Type II subfamily. In terms of assembly, oligomer. Post-translationally, contains 2 disulfide bonds. Nematocytes.

It localises to the secreted. It is found in the nematocyst. Its subcellular location is the target cell membrane. The fraction containing this toxin and CfTX-A shows potent hemolytic activity. This fraction causes minor effects on the cardiovascular system of anesthetized rats (at 25 ug/kg), since it has no significant effects on heart rate but produces relatively small increases in mean arterial pressure. This is Toxin CfTX-A from Chironex fleckeri (Australian box jellyfish).